We begin with the raw amino-acid sequence, 293 residues long: 4-diphosphocytidyl-2-C-methyl-D-erythritol kinase (293 aa).

Residue Lys-16 is part of the active site. 99–109 is a binding site for ATP; sequence PMGAGLGGGSS. Residue Asp-141 is part of the active site.

The protein belongs to the GHMP kinase family. IspE subfamily.

It carries out the reaction 4-CDP-2-C-methyl-D-erythritol + ATP = 4-CDP-2-C-methyl-D-erythritol 2-phosphate + ADP + H(+). It participates in isoprenoid biosynthesis; isopentenyl diphosphate biosynthesis via DXP pathway; isopentenyl diphosphate from 1-deoxy-D-xylulose 5-phosphate: step 3/6. In terms of biological role, catalyzes the phosphorylation of the position 2 hydroxy group of 4-diphosphocytidyl-2C-methyl-D-erythritol. This is 4-diphosphocytidyl-2-C-methyl-D-erythritol kinase from Burkholderia cenocepacia (strain ATCC BAA-245 / DSM 16553 / LMG 16656 / NCTC 13227 / J2315 / CF5610) (Burkholderia cepacia (strain J2315)).